The sequence spans 163 residues: Lipoprotein signal peptidase (163 aa).

The next 4 helical transmembrane spans lie at 9 to 29 (AWPW…SKYL), 42 to 62 (ILPF…SFLG), 67 to 87 (WQII…ILWL), and 93 to 113 (SEIM…GNFI). Catalysis depends on residues aspartate 123 and aspartate 141. A helical membrane pass occupies residues 137 to 157 (FNVADSAICVGVFLLIVHMLL).

Belongs to the peptidase A8 family.

Its subcellular location is the cell inner membrane. The enzyme catalyses Release of signal peptides from bacterial membrane prolipoproteins. Hydrolyzes -Xaa-Yaa-Zaa-|-(S,diacylglyceryl)Cys-, in which Xaa is hydrophobic (preferably Leu), and Yaa (Ala or Ser) and Zaa (Gly or Ala) have small, neutral side chains.. It functions in the pathway protein modification; lipoprotein biosynthesis (signal peptide cleavage). Its function is as follows. This protein specifically catalyzes the removal of signal peptides from prolipoproteins. This is Lipoprotein signal peptidase from Coxiella burnetii (strain RSA 331 / Henzerling II).